The sequence spans 964 residues: Chaperone protein ClpB4, mitochondrial (964 aa).

The transit peptide at 1–39 (MALRRLSKSVSSAIKAQYTLSRPSPLLRSRSLSSSPHYT) directs the protein to the mitochondrion. Residues 83-227 (VNQNEFTEMA…KDAIKDVRGD (145 aa)) enclose the Clp R domain. 2 repeat regions span residues 88–153 (FTEM…ISKQ) and 164–227 (LGSS…VRGD). Residues 242–490 (LEKYGNDLTE…KLKMEITSKP (249 aa)) form an i region. Residues 287-294 (GEPGVGKT) and 690-697 (GPTGVGKT) contribute to the ATP site. Positions 616–807 (VTDLDIAEIV…VVIMTSNIGS (192 aa)) are II.

It belongs to the ClpA/ClpB family.

Its subcellular location is the mitochondrion. Its function is as follows. Molecular chaperone that does not seem to be involved in heat stress response or tolerance. The chain is Chaperone protein ClpB4, mitochondrial (CLPB4) from Arabidopsis thaliana (Mouse-ear cress).